We begin with the raw amino-acid sequence, 156 residues long: Cyanate hydratase (156 aa).

Catalysis depends on residues R96, E99, and S122.

Belongs to the cyanase family.

The enzyme catalyses cyanate + hydrogencarbonate + 3 H(+) = NH4(+) + 2 CO2. Functionally, catalyzes the reaction of cyanate with bicarbonate to produce ammonia and carbon dioxide. In Pseudomonas aeruginosa (strain UCBPP-PA14), this protein is Cyanate hydratase.